Consider the following 359-residue polypeptide: Histidinol-phosphate aminotransferase (359 aa).

At lysine 217 the chain carries N6-(pyridoxal phosphate)lysine.

It belongs to the class-II pyridoxal-phosphate-dependent aminotransferase family. Histidinol-phosphate aminotransferase subfamily. Homodimer. The cofactor is pyridoxal 5'-phosphate.

The catalysed reaction is L-histidinol phosphate + 2-oxoglutarate = 3-(imidazol-4-yl)-2-oxopropyl phosphate + L-glutamate. The protein operates within amino-acid biosynthesis; L-histidine biosynthesis; L-histidine from 5-phospho-alpha-D-ribose 1-diphosphate: step 7/9. In Roseobacter denitrificans (strain ATCC 33942 / OCh 114) (Erythrobacter sp. (strain OCh 114)), this protein is Histidinol-phosphate aminotransferase.